Consider the following 217-residue polypeptide: Probable GTP-binding protein EngB (217 aa).

An EngB-type G domain is found at 37 to 214; sequence DGVEIAFAGR…RAAMAKLLEE (178 aa). GTP contacts are provided by residues 45–52, 72–76, 92–95, 159–162, and 193–195; these read GRSNVGKS, GRTQE, DMPG, TKAD, and TSS. Mg(2+)-binding residues include serine 52 and threonine 74.

Belongs to the TRAFAC class TrmE-Era-EngA-EngB-Septin-like GTPase superfamily. EngB GTPase family. Mg(2+) is required as a cofactor.

Functionally, necessary for normal cell division and for the maintenance of normal septation. This is Probable GTP-binding protein EngB from Bradyrhizobium diazoefficiens (strain JCM 10833 / BCRC 13528 / IAM 13628 / NBRC 14792 / USDA 110).